The sequence spans 172 residues: Small ribosomal subunit protein uS5 (172 aa).

The 64-residue stretch at 17–80 (LREKMISVNR…EQARRNMFKV (64 aa)) folds into the S5 DRBM domain.

The protein belongs to the universal ribosomal protein uS5 family. Part of the 30S ribosomal subunit. Contacts proteins S4 and S8.

Its function is as follows. With S4 and S12 plays an important role in translational accuracy. In terms of biological role, located at the back of the 30S subunit body where it stabilizes the conformation of the head with respect to the body. The protein is Small ribosomal subunit protein uS5 of Paraburkholderia phytofirmans (strain DSM 17436 / LMG 22146 / PsJN) (Burkholderia phytofirmans).